Here is a 152-residue protein sequence, read N- to C-terminus: Endoribonuclease YbeY (152 aa).

Residues H113, H117, and H123 each contribute to the Zn(2+) site.

It belongs to the endoribonuclease YbeY family. Zn(2+) serves as cofactor.

It localises to the cytoplasm. Its function is as follows. Single strand-specific metallo-endoribonuclease involved in late-stage 70S ribosome quality control and in maturation of the 3' terminus of the 16S rRNA. The sequence is that of Endoribonuclease YbeY from Acidovorax ebreus (strain TPSY) (Diaphorobacter sp. (strain TPSY)).